Consider the following 545-residue polypeptide: CTP synthase (545 aa).

Residues 1–265 are amidoligase domain; sequence MSKYIFVTGG…DDLVVQNLGL (265 aa). S13 provides a ligand contact to CTP. S13 lines the UTP pocket. Residues 14 to 19 and D71 each bind ATP; that span reads SLGKGA. Mg(2+)-binding residues include D71 and E139. CTP is bound by residues 146–148, 186–191, and K222; these read DIE and KTKPTQ. UTP is bound by residues 186-191 and K222; that span reads KTKPTQ. Residues 290–541 enclose the Glutamine amidotransferase type-1 domain; sequence VIALVGKYVG…MRAAIAQRER (252 aa). G351 lines the L-glutamine pocket. C378 acts as the Nucleophile; for glutamine hydrolysis in catalysis. L-glutamine-binding positions include 379–382, E402, and R469; that span reads LGMQ. Residues H514 and E516 contribute to the active site.

Belongs to the CTP synthase family. In terms of assembly, homotetramer.

The enzyme catalyses UTP + L-glutamine + ATP + H2O = CTP + L-glutamate + ADP + phosphate + 2 H(+). The catalysed reaction is L-glutamine + H2O = L-glutamate + NH4(+). It catalyses the reaction UTP + NH4(+) + ATP = CTP + ADP + phosphate + 2 H(+). It functions in the pathway pyrimidine metabolism; CTP biosynthesis via de novo pathway; CTP from UDP: step 2/2. Allosterically activated by GTP, when glutamine is the substrate; GTP has no effect on the reaction when ammonia is the substrate. The allosteric effector GTP functions by stabilizing the protein conformation that binds the tetrahedral intermediate(s) formed during glutamine hydrolysis. Inhibited by the product CTP, via allosteric rather than competitive inhibition. In terms of biological role, catalyzes the ATP-dependent amination of UTP to CTP with either L-glutamine or ammonia as the source of nitrogen. Regulates intracellular CTP levels through interactions with the four ribonucleotide triphosphates. The protein is CTP synthase of Acidithiobacillus ferrooxidans (strain ATCC 23270 / DSM 14882 / CIP 104768 / NCIMB 8455) (Ferrobacillus ferrooxidans (strain ATCC 23270)).